We begin with the raw amino-acid sequence, 178 residues long: Hypoxanthine phosphoribosyltransferase (178 aa).

2 residues coordinate diphosphate: R43 and G44. Residue E99 coordinates GMP. Residue E99 participates in IMP binding. Residues E99 and D100 each contribute to the Mg(2+) site. D103 functions as the Proton acceptor in the catalytic mechanism. GMP-binding positions include 103–108 (DSGNTL), K131, and D159. Residues 103–108 (DSGNTL) and K131 each bind IMP. R165 provides a ligand contact to diphosphate.

This sequence belongs to the purine/pyrimidine phosphoribosyltransferase family. Homotetramer. The cofactor is Mg(2+).

It is found in the cytoplasm. The catalysed reaction is IMP + diphosphate = hypoxanthine + 5-phospho-alpha-D-ribose 1-diphosphate. The enzyme catalyses GMP + diphosphate = guanine + 5-phospho-alpha-D-ribose 1-diphosphate. It functions in the pathway purine metabolism; IMP biosynthesis via salvage pathway; IMP from hypoxanthine: step 1/1. Its function is as follows. Purine salvage pathway enzyme which catalyzes the transfer of the ribosyl-5-phosphate group from 5-phospho-alpha-D-ribose 1-diphosphate (PRPP) to the N9 position of hypoxanthine to yield IMP (inosine 5'-monophosphate). To a lesser extent, can also act on guanine leading to GMP, but shows a highly less efficient activity with xanthine. The protein is Hypoxanthine phosphoribosyltransferase (hpt) of Shigella flexneri.